Here is a 200-residue protein sequence, read N- to C-terminus: Phospholipase A2 inhibitor NAI (200 aa).

An N-terminal signal peptide occupies residues 1 to 19 (MKSLLFCCLFGTFLATGMC). Intrachain disulfides connect C22–C46, C25–C32, C39–C67, C73–C94, C95–C100, C120–C145, C138–C165, and C171–C191.

It belongs to the CNF-like-inhibitor family. As to quaternary structure, heterotrimer of 2 subunits A and 1 subunit B; non-covalently linked. Expressed by the liver.

The protein localises to the secreted. Its function is as follows. Inhibits the enzymatic activity of all phospholipase A2 tested, binding with micromole to nanomole affinity. This is Phospholipase A2 inhibitor NAI from Notechis ater (Black tiger snake).